Here is a 1139-residue protein sequence, read N- to C-terminus: Solute carrier family 12 member 5 (1139 aa).

2 disordered regions span residues 1–62 (MSRR…KGRE) and 95–116 (PQGSKEHEEAENNEGGKKKPVQ). The Cytoplasmic segment spans residues 1–98 (MSRRFTVTSL…ANYTNLPQGS (98 aa)). Basic and acidic residues predominate over residues 21–45 (PESRRHSVADPRRLPREDVKGDGNP). Residues 46–55 (KESSPFINST) are compositionally biased toward polar residues. A Phosphothreonine modification is found at T57. A compositionally biased stretch (basic and acidic residues) spans 98–111 (SKEHEEAENNEGGK). A discontinuously helical membrane pass occupies residues 99-120 (KEHEEAENNEGGKKKPVQAPRM). K113 contacts K(+). Residues 121 to 129 (GTFMGVYLP) lie on the Extracellular side of the membrane. Residues 130 to 151 (CLQNIFGVILFLRLTWVVGIAG) form a helical membrane-spanning segment. Topologically, residues 152-174 (IMESFCMVFICCSCTMLTAISMS) are cytoplasmic. A helical membrane pass occupies residues 175–203 (AIATNGVVPAGGSYYMISRSLGPEFGGAV). A184 is a binding site for chloride. The Extracellular portion of the chain corresponds to 204–229 (GLCFYLGTTFAGAMYILGTIEILLAY). The next 2 membrane-spanning stretches (helical) occupy residues 230 to 250 (LFPAMAIFKAEDASGEAAAML) and 251 to 276 (NNMRVYGTCVLTCMATVVFVGVKYVN). The Extracellular segment spans residues 277 to 402 (KFALVFLGCV…ERRGMPSVGL (126 aa)). A disulfide bridge connects residues C310 and C325. N-linked (GlcNAc...) asparagine glycans are attached at residues N314, N333, N351, and N362. A disulfide bridge links C345 with C354. A helical transmembrane segment spans residues 403–420 (ADGTPVDMDHPYVFSDMT). Residue M410 participates in K(+) binding. Chloride is bound by residues Y414 and V415. Residues 421–429 (SYFTLLVGI) lie on the Cytoplasmic side of the membrane. The helical transmembrane segment at 430–453 (YFPSVTGIMAGSNRSGDLRDAQKS) threads the bilayer. K(+) is bound at residue D446. Topologically, residues 454-485 (IPTGTILAIATTSAVYISSVVLFGACIEGVVL) are extracellular. The chain crosses the membrane as a helical span at residues 486–513 (RDKFGEAVNGNLVVGTLAWPSPWVIVIG). At 514–534 (SFFSTCGAGLQSLTGAPRLLQ) the chain is on the cytoplasmic side. The next 2 helical transmembrane spans lie at 535–555 (AISRDGIVPFLQVFGHGKANG) and 556–578 (EPTWALLLTACICEIGILIASLD). E569 serves as a coordination point for chloride. The Cytoplasmic segment spans residues 579–592 (EVAPILSMFFLMCY). 2 helical membrane passes run 593–615 (MFVNLACAVQTLLRTPNWRPRFR) and 616–632 (YYHWTLSFLGMSLCLAL). At 633-1139 (MFICSWYYAL…GGREVITIYS (507 aa)) the chain is on the cytoplasmic side. Residues 667-681 (GIRGLSLSAARYALL) form a scissor helix region. T929 bears the Phosphothreonine; by OXSR1 and STK39 mark. The interval 943 to 1025 (HLTKNERERE…PEGEGETDPE (83 aa)) is disordered. Basic and acidic residues predominate over residues 945-962 (TKNEREREIQSITDESRG). The segment covering 982 to 994 (TACDNEEKPEEEV) has biased composition (acidic residues). Positions 1003–1012 (PSCPSSSPSP) are enriched in low complexity. Residue T1030 is modified to Phosphothreonine; by OXSR1 and STK39. Residues 1033 to 1052 (KDKSAAQKNKGPSPVSSEGI) form a disordered region. S1045, S1048, and S1049 each carry phosphoserine.

Belongs to the SLC12A transporter family. K/Cl co-transporter subfamily. As to quaternary structure, homodimer; adopts a domain-swap conformation at the scissor helices connecting the transmembrane domain and C-terminal domain. Heterodimer wHeterodimer with K-Cl cotransporters SLC12A6 and SLC12A7. Interacts with AP2A1. Phosphorylated at Thr-929 and Thr-1030 by OXSR1/OSR1 and STK39/SPAK downstream of WNK kinases (WNK1, WNK2, WNK3 or WNK4), inhibiting the potassium-chloride cotransport activity. As to expression, highly expressed in brain. Not detected in other tissues. Highly expressed in pyramidal neurons and in neurons throughout the cortex, hippocampus, the granular layer of the cerebellum and in groups of neurons throughout the brainstem. Barely detectable in dorsal-root ganglions.

Its subcellular location is the cell membrane. It localises to the cell projection. It is found in the dendrite. It catalyses the reaction K(+)(in) + chloride(in) = K(+)(out) + chloride(out). Its activity is regulated as follows. Inhibited following phosphorylation by OXSR1/OSR1 and STK39/SPAK: phosphorylation takes place downstream of WNK kinases (WNK1, WNK2, WNK3 or WNK4) in response to hyperosmotic stress and subsequent cell shrinkage. Functionally, mediates electroneutral potassium-chloride cotransport in mature neurons and is required for neuronal Cl(-) homeostasis. As major extruder of intracellular chloride, it establishes the low neuronal Cl(-) levels required for chloride influx after binding of GABA-A and glycine to their receptors, with subsequent hyperpolarization and neuronal inhibition. Involved in the regulation of dendritic spine formation and maturation. The protein is Solute carrier family 12 member 5 (Slc12a5) of Rattus norvegicus (Rat).